A 148-amino-acid chain; its full sequence is HTH-type transcriptional regulator Ptr1 (148 aa).

Positions 2–63 constitute an HTH asnC-type domain; that stretch reads LDRIDLKILR…SINPKNLGFE (62 aa). The segment at residues 21–40 is a DNA-binding region (H-T-H motif); that stretch reads FREIGRELGISEGTVRNRVK.

Homodimer.

Functionally, participates in positive as well as negative regulation of transcription. Binds to its own promoter. The polypeptide is HTH-type transcriptional regulator Ptr1 (ptr1) (Methanocaldococcus jannaschii (strain ATCC 43067 / DSM 2661 / JAL-1 / JCM 10045 / NBRC 100440) (Methanococcus jannaschii)).